The chain runs to 210 residues: Probable GTP-binding protein EngB (210 aa).

One can recognise an EngB-type G domain in the interval 22–198; it reads FLPEYAFIGR…LTYIDEVNQE (177 aa). GTP contacts are provided by residues 30 to 37, 57 to 61, 75 to 78, 142 to 145, and 177 to 179; these read GRSNVGKS, GKTQL, DLPG, TKAD, and TSS. Residues S37 and T59 each coordinate Mg(2+).

It belongs to the TRAFAC class TrmE-Era-EngA-EngB-Septin-like GTPase superfamily. EngB GTPase family. The cofactor is Mg(2+).

Its function is as follows. Necessary for normal cell division and for the maintenance of normal septation. The protein is Probable GTP-binding protein EngB of Flavobacterium johnsoniae (strain ATCC 17061 / DSM 2064 / JCM 8514 / BCRC 14874 / CCUG 350202 / NBRC 14942 / NCIMB 11054 / UW101) (Cytophaga johnsonae).